Consider the following 445-residue polypeptide: tRNA-2-methylthio-N(6)-dimethylallyladenosine synthase (445 aa).

One can recognise an MTTase N-terminal domain in the interval 3 to 124 (KKLYIKTYGC…LPELISKVVR (122 aa)). [4Fe-4S] cluster is bound by residues Cys-12, Cys-48, Cys-87, Cys-162, Cys-166, and Cys-169. The Radical SAM core domain occupies 148-380 (YPQGTSAFIS…QQELMAQQLA (233 aa)). Residues 383–445 (TSCVGSTMKV…SLNSLTGEIL (63 aa)) form the TRAM domain.

It belongs to the methylthiotransferase family. MiaB subfamily. Monomer. The cofactor is [4Fe-4S] cluster.

The protein resides in the cytoplasm. The catalysed reaction is N(6)-dimethylallyladenosine(37) in tRNA + (sulfur carrier)-SH + AH2 + 2 S-adenosyl-L-methionine = 2-methylsulfanyl-N(6)-dimethylallyladenosine(37) in tRNA + (sulfur carrier)-H + 5'-deoxyadenosine + L-methionine + A + S-adenosyl-L-homocysteine + 2 H(+). Its function is as follows. Catalyzes the methylthiolation of N6-(dimethylallyl)adenosine (i(6)A), leading to the formation of 2-methylthio-N6-(dimethylallyl)adenosine (ms(2)i(6)A) at position 37 in tRNAs that read codons beginning with uridine. This is tRNA-2-methylthio-N(6)-dimethylallyladenosine synthase from Rickettsia conorii (strain ATCC VR-613 / Malish 7).